Reading from the N-terminus, the 355-residue chain is Putative inositol monophosphatase 3 (355 aa).

Residues 16–36 traverse the membrane as a helical segment; it reads VPATIFAILLTIVLVYFLNFH. 5 residues coordinate Mg(2+): Glu127, Asp167, Leu169, Asp170, and Asp292. Glu127 is a substrate binding site. Residues 169 to 172 and Asp292 contribute to the substrate site; that span reads LDAT.

The protein belongs to the inositol monophosphatase superfamily. It depends on Mg(2+) as a cofactor.

The protein localises to the membrane. The enzyme catalyses a myo-inositol phosphate + H2O = myo-inositol + phosphate. The protein operates within polyol metabolism; myo-inositol biosynthesis; myo-inositol from D-glucose 6-phosphate: step 2/2. The sequence is that of Putative inositol monophosphatase 3 from Drosophila pseudoobscura pseudoobscura (Fruit fly).